We begin with the raw amino-acid sequence, 529 residues long: uncharacterized protein (529 aa).

Positions 1–20 are disordered; the sequence is MGADLKQPQDADSPPKGVSR. Residues 1–52 constitute a signal peptide (tat-type signal); it reads MGADLKQPQDADSPPKGVSRRRFLTTGAAAVVGTGVGAGGTALLSSHPRGPA.

Predicted to be exported by the Tat system. The position of the signal peptide cleavage has not been experimentally proven.

This is an uncharacterized protein from Mycobacterium tuberculosis (strain CDC 1551 / Oshkosh).